Reading from the N-terminus, the 886-residue chain is Methanogenesis regulatory histidine kinase FilI (886 aa).

The next 2 membrane-spanning stretches (helical) occupy residues Ile7–Cys27 and Val270–Leu290. Residues Leu290–Gln344 enclose the HAMP domain. The PAS domain maps to Ser349–Glu419. Positions Phe421–Lys473 constitute a PAC domain. The Histidine kinase domain maps to Thr674 to Pro886. Phosphohistidine; by autocatalysis is present on His677.

Autophosphorylated.

It localises to the cell membrane. The catalysed reaction is ATP + protein L-histidine = ADP + protein N-phospho-L-histidine.. Member of the two-component regulatory system FilI/FilRs, which is involved in the regulation of methanogenesis. Autophosphorylates and specifically transfers the phosphoryl group to both FilR1 and FilR2. Functionally, could also catalyze the synthesis of the quorum sensing (QS) signal molecules carboxyl-acyl homoserine lactones (AHLs), which regulate the transition of the cellular morphology from short cells to filaments and of the carbon metabolic flux from biomass formation to methane production. This Methanothrix harundinacea (strain 6Ac) (Methanosaeta harundinacea) protein is Methanogenesis regulatory histidine kinase FilI.